A 384-amino-acid polypeptide reads, in one-letter code: Sphingosine 1-phosphate receptor 3 (384 aa).

Residues 1–34 (MMINPLIYLHYNYTGKLDHRPTVGTSPGTRDPKT) are Extracellular-facing. Residue Asn12 is glycosylated (N-linked (GlcNAc...) asparagine). The helical transmembrane segment at 35 to 55 (IAFLVVCSFIILENLTVLLAI) threads the bilayer. The Cytoplasmic segment spans residues 56–64 (WKNHRFHNR). A helical transmembrane segment spans residues 65-85 (MYFFIGNLALCDLLASVAYLV). Over 86-105 (NLLLSGEKTLQLSPVLWFVR) the chain is Extracellular. Residues 106–126 (EGSMFVTLGASIFSLLAIAIE) traverse the membrane as a helical segment. The Cytoplasmic portion of the chain corresponds to 127–144 (RHLTMIKMRPYDASKNYR). Residues 145–165 (VFLLIGTCWLVAVLLGALPIL) traverse the membrane as a helical segment. The Extracellular segment spans residues 166–186 (GWNCLGNLPDCSTILPLYTKK). The helical transmembrane segment at 187-207 (YVAFCIIVFIVLLLAMSVLYA) threads the bilayer. Topologically, residues 208–235 (RIYILVKSSSQKVSKHRNSEHAMSLLRT) are cytoplasmic. A helical membrane pass occupies residues 236-256 (VIIVVGVFIACWMPIFVLLLL). Topologically, residues 257-271 (DVACERPCPILYKAD) are extracellular. A helical transmembrane segment spans residues 272–292 (WFIAVAVLNSAMNPIIYTLAS). The Cytoplasmic portion of the chain corresponds to 293 to 384 (REMRRAFLGL…REGEGGNGGR (92 aa)). Composition is skewed to polar residues over residues 315–325 (NDSGNKQFQEP) and 336–347 (QTHPNQSQQSSR). The tract at residues 315 to 384 (NDSGNKQFQE…REGEGGNGGR (70 aa)) is disordered. Over residues 349–359 (AELDREQETGH) the composition is skewed to basic and acidic residues.

Belongs to the G-protein coupled receptor 1 family.

Its subcellular location is the cell membrane. Its function is as follows. Receptor for the lysosphingolipid sphingosine 1-phosphate (S1P). This is Sphingosine 1-phosphate receptor 3 (s1pr3) from Takifugu rubripes (Japanese pufferfish).